The primary structure comprises 445 residues: Enolase 2 (445 aa).

Substrate-binding residues include H164 and E173. E216 serves as the catalytic Proton donor. Positions 251, 301, and 328 each coordinate Mg(2+). Substrate-binding residues include E301 and D328. The Proton acceptor role is filled by K353. Substrate-binding positions include S380–S383 and K404.

The protein belongs to the enolase family. Homodimer. It depends on Mg(2+) as a cofactor.

Its subcellular location is the cytoplasm. The catalysed reaction is (2R)-2-phosphoglycerate = phosphoenolpyruvate + H2O. Its pathway is carbohydrate degradation; glycolysis; pyruvate from D-glyceraldehyde 3-phosphate: step 4/5. The chain is Enolase 2 (ENO2) from Hevea brasiliensis (Para rubber tree).